A 442-amino-acid chain; its full sequence is tRNA-2-methylthio-N(6)-dimethylallyladenosine synthase (442 aa).

Residues 2–120 (KKVFIRTFGC…LPKMIVDKET (119 aa)) form the MTTase N-terminal domain. [4Fe-4S] cluster-binding residues include Cys11, Cys49, Cys83, Cys157, Cys161, and Cys164. Positions 143 to 375 (RVEGGAAFVS…NEVIEAETAR (233 aa)) constitute a Radical SAM core domain. Positions 378–441 (QTMIGTVQRC…TFSLRGKVVE (64 aa)) constitute a TRAM domain.

This sequence belongs to the methylthiotransferase family. MiaB subfamily. Monomer. Requires [4Fe-4S] cluster as cofactor.

The protein resides in the cytoplasm. The catalysed reaction is N(6)-dimethylallyladenosine(37) in tRNA + (sulfur carrier)-SH + AH2 + 2 S-adenosyl-L-methionine = 2-methylsulfanyl-N(6)-dimethylallyladenosine(37) in tRNA + (sulfur carrier)-H + 5'-deoxyadenosine + L-methionine + A + S-adenosyl-L-homocysteine + 2 H(+). Functionally, catalyzes the methylthiolation of N6-(dimethylallyl)adenosine (i(6)A), leading to the formation of 2-methylthio-N6-(dimethylallyl)adenosine (ms(2)i(6)A) at position 37 in tRNAs that read codons beginning with uridine. The protein is tRNA-2-methylthio-N(6)-dimethylallyladenosine synthase of Neisseria meningitidis serogroup C (strain 053442).